A 541-amino-acid chain; its full sequence is Chaperonin GroEL (541 aa).

Residues threonine 30–proline 33, lysine 51, aspartate 87–threonine 91, glycine 415, asparagine 479–alanine 481, and aspartate 495 contribute to the ATP site.

It belongs to the chaperonin (HSP60) family. In terms of assembly, forms a cylinder of 14 subunits composed of two heptameric rings stacked back-to-back. Interacts with the co-chaperonin GroES.

Its subcellular location is the cytoplasm. The catalysed reaction is ATP + H2O + a folded polypeptide = ADP + phosphate + an unfolded polypeptide.. In terms of biological role, together with its co-chaperonin GroES, plays an essential role in assisting protein folding. The GroEL-GroES system forms a nano-cage that allows encapsulation of the non-native substrate proteins and provides a physical environment optimized to promote and accelerate protein folding. The polypeptide is Chaperonin GroEL (Acinetobacter baumannii (strain SDF)).